We begin with the raw amino-acid sequence, 299 residues long: MCDPIREDGSNKRGAVSKEKRPYIHREWSWADIIRALTVINVHFLCLLAPFNYKWEALRFGFVLYALTSLSITFSYHRNLAHRSFKLPKWLEYPLAYFAVFALQGDPLDWVSIHRFHHQFTDSDRDPHSPIEGFWFSHVWWICDTRYIKYKCGGRNNVMDLKQQWFYWFLRMTIGFHVLMFWTVLYLYGGLPYLTCGGGVGGVIGYHVTWLVNSACHIWGSRSWKTKDTSRNVWWLSLFTMGESWHNNHHAFESSARQGLEWWQIDITWYLIRLFEVLGLATDVKLPSEIQKQKLALTR.

Helical transmembrane passes span 31–51 and 55–75; these read ADIIRALTVINVHFLCLLAPF and WEALRFGFVLYALTSLSITFS. A Histidine box-1 motif is present at residues 77–82; sequence HRNLAH. The short motif at 114 to 118 is the Histidine box-2 element; sequence HRFHH. A run of 2 helical transmembrane segments spans residues 174-194 and 199-219; these read IGFHVLMFWTVLYLYGGLPYL and GVGGVIGYHVTWLVNSACHIW. The short motif at 246 to 250 is the Histidine box-3 element; it reads HNNHH.

It belongs to the fatty acid desaturase type 1 family. Fe cation is required as a cofactor.

Its subcellular location is the endoplasmic reticulum membrane. It functions in the pathway lipid metabolism; polyunsaturated fatty acid biosynthesis. This is Delta-9 desaturase-like 5 protein from Arabidopsis thaliana (Mouse-ear cress).